We begin with the raw amino-acid sequence, 95 residues long: Small ribosomal subunit protein bS6 (95 aa).

The protein belongs to the bacterial ribosomal protein bS6 family.

In terms of biological role, binds together with bS18 to 16S ribosomal RNA. The chain is Small ribosomal subunit protein bS6 from Bacillus pumilus (strain SAFR-032).